Here is a 38-residue protein sequence, read N- to C-terminus: Photosystem II reaction center protein Y (38 aa).

Over 1–4 the chain is Lumenal; sequence MSMR. The helical transmembrane segment at 5–23 threads the bilayer; sequence LVVVLLPLGIALGWAVYNI. The Stromal portion of the chain corresponds to 24 to 38; the sequence is GKLAIEQWRRTGSKV.

Belongs to the PsbY family. PSII is composed of 1 copy each of membrane proteins PsbA, PsbB, PsbC, PsbD, PsbE, PsbF, PsbH, PsbI, PsbJ, PsbK, PsbL, PsbM, PsbT, PsbX, PsbY, PsbZ, Psb30/Ycf12, at least 3 peripheral proteins of the oxygen-evolving complex and a large number of cofactors. It forms dimeric complexes.

The protein localises to the plastid. It is found in the cyanelle thylakoid membrane. Its function is as follows. Loosely associated component of the core of photosystem II (PSII), it is not always seen in crystals. PSII is a light-driven water plastoquinone oxidoreductase, using light energy to abstract electrons from H(2)O, generating a proton gradient subsequently used for ATP formation. This chain is Photosystem II reaction center protein Y, found in Cyanophora paradoxa.